A 196-amino-acid chain; its full sequence is DnaA initiator-associating protein DiaA (196 aa).

The SIS domain occupies 34–196; sequence MVQSLLNGNK…DNTLFPHQND (163 aa).

Belongs to the SIS family. DiaA subfamily. Homotetramer; dimer of dimers.

Its function is as follows. Required for the timely initiation of chromosomal replication via direct interactions with the DnaA initiator protein. The chain is DnaA initiator-associating protein DiaA from Pectobacterium carotovorum subsp. carotovorum (strain PC1).